We begin with the raw amino-acid sequence, 406 residues long: Endo-xylogalacturonan hydrolase A (406 aa).

The signal sequence occupies residues 1 to 18; it reads MALYRNLYLLASLGLSSA. PbH1 repeat units lie at residues 183–213, 214–257, 266–289, 299–320, and 333–375; these read ATNV…DIGE, STYV…SVGS, VKNI…KTYP, VSNV…QIQS, and PGNA…SISG. The active-site Proton donor is Asp-228. The active site involves His-251. 2 N-linked (GlcNAc...) asparagine glycosylation sites follow: Asn-278 and Asn-301.

It belongs to the glycosyl hydrolase 28 family.

It localises to the secreted. Its function is as follows. Pectinolytic enzyme involved in the degradation of xylogalacturonan (xga), a galacturonan backbone heavily substituted with xylose, and which is one important component of the hairy regions of pectin. Activity requires a galacturonic acid backbone substituted with xylose. This is Endo-xylogalacturonan hydrolase A (xghA) from Aspergillus tubingensis.